The following is a 378-amino-acid chain: Alginate lyase (378 aa).

Positions 1 to 28 are cleaved as a signal peptide; the sequence is MQTPKLIRPTLLSMAIVSSMAWATGASA. Residues 67–68, 140–141, and Tyr-258 each bind substrate; these read SK and HT.

Belongs to the polysaccharide lyase 5 family.

It is found in the periplasm. The catalysed reaction is Eliminative cleavage of alginate to give oligosaccharides with 4-deoxy-alpha-L-erythro-hex-4-enuronosyl groups at their non-reducing ends and beta-D-mannuronate at their reducing end.. Catalyzes the depolymerization of alginate by cleaving the beta-1,4 glycosidic bond between two adjacent sugar residues via a beta-elimination mechanism. May serve to degrade mislocalized alginate that is trapped in the periplasmic space. The protein is Alginate lyase of Pseudomonas syringae pv. tomato (strain ATCC BAA-871 / DC3000).